Here is a 388-residue protein sequence, read N- to C-terminus: 2-Hydroxyacid oxidase (388 aa).

Residues 1-21 are disordered; it reads MENQFKNNNNSSSIETSNQFS. Positions 26–384 constitute an FMN hydroxy acid dehydrogenase domain; sequence NRLDSFVSVS…NNSIIWDQNK (359 aa). A glyoxylate-binding site is contributed by Tyr-52. FMN-binding positions include 105-107, Ser-134, 156-158, and Thr-184; these read PWA and QLY. Position 158 (Tyr-158) interacts with glyoxylate. Glyoxylate is bound at residue Arg-193. FMN-binding residues include Lys-255 and Ser-277. Residues His-279 and Arg-282 each coordinate glyoxylate. His-279 functions as the Proton acceptor in the catalytic mechanism. FMN-binding positions include 310–314 and 333–334; these read DGGIR and GR.

It belongs to the FMN-dependent alpha-hydroxy acid dehydrogenase family. Homotetramer. FMN serves as cofactor.

The enzyme catalyses glycolate + O2 = glyoxylate + H2O2. It catalyses the reaction a (2S)-2-hydroxycarboxylate + O2 = a 2-oxocarboxylate + H2O2. Catalyzes the oxidation of glycolate to glyoxylate, with a reduction of O2 to H2O2. May use other 2-hydroxyacids as substrates. This chain is 2-Hydroxyacid oxidase (haox), found in Dictyostelium discoideum (Social amoeba).